The sequence spans 145 residues: Transcription antitermination protein NusB (145 aa).

Belongs to the NusB family.

Involved in transcription antitermination. Required for transcription of ribosomal RNA (rRNA) genes. Binds specifically to the boxA antiterminator sequence of the ribosomal RNA (rrn) operons. In Acidothermus cellulolyticus (strain ATCC 43068 / DSM 8971 / 11B), this protein is Transcription antitermination protein NusB.